The primary structure comprises 377 residues: UPF0754 membrane protein GK0639 (377 aa).

Transmembrane regions (helical) follow at residues Leu-7 to Val-27 and Tyr-357 to Leu-377.

The protein belongs to the UPF0754 family.

The protein localises to the cell membrane. The chain is UPF0754 membrane protein GK0639 from Geobacillus kaustophilus (strain HTA426).